Consider the following 394-residue polypeptide: Thioredoxin-interacting protein (394 aa).

Residue K212 forms a Glycyl lysine isopeptide (Lys-Gly) (interchain with G-Cter in ubiquitin) linkage. Position 361 is a phosphoserine (S361).

The protein belongs to the arrestin family. In terms of assembly, homodimer; disulfide-linked. Interacts with TXN/thioredoxin through its redox-active site. Interacts with transcriptional repressors ZBTB16, ZBTB32 and HDAC1. Interacts with DDIT4. Post-translationally, ubiquitinated; undergoes heterotypic 'Lys-48'-/'Lys-63'-branched polyubiquitination catalyzed by ITCH and UBR5 resulting in proteasomal degradation. Deubiquitinated by USP5, leading to TXNIP stabilization.

Its subcellular location is the cytoplasm. Its function is as follows. May act as an oxidative stress mediator by inhibiting thioredoxin activity or by limiting its bioavailability. Interacts with COPS5 and restores COPS5-induced suppression of CDKN1B stability, blocking the COPS5-mediated translocation of CDKN1B from the nucleus to the cytoplasm. Functions as a transcriptional repressor, possibly by acting as a bridge molecule between transcription factors and corepressor complexes, and over-expression will induce G0/G1 cell cycle arrest. Required for the maturation of natural killer cells. Acts as a suppressor of tumor cell growth. Inhibits the proteasomal degradation of DDIT4, and thereby contributes to the inhibition of the mammalian target of rapamycin complex 1 (mTORC1). The protein is Thioredoxin-interacting protein (Txnip) of Rattus norvegicus (Rat).